Consider the following 346-residue polypeptide: MESTLGAGIVIAEALQNQLAWLENVWLWITFLGDPKILFLFYFPAAYYASRRVGIAVLWISLITEWLNLIFKWFLFGDRPFWWVHESGYYSQAPAQVHQFPSSCETGPGSPSGHCMITGAALWPIMTALSSQVATRARSRWVRVMPSLAYCTFLLAVGLSRIFILAHFPHQVLAGLITGAVLGWLMTPRVPMERELSFYGLTALALMLGTSLIYWTLFTLGLDLSWSISLAFKWCERPEWIHVDSRPFASLSRDSGAALGLGIALHSPCYAQVRRAQLGNGQKIACLVLAMGLLGPLDWLGHPPQISLFYIFNFLKYTLWPCLVLALVPWAVHMFSAQEAPPIHSS.

Residues 1–24 are Lumenal-facing; sequence MESTLGAGIVIAEALQNQLAWLEN. The helical transmembrane segment at 25–45 threads the bilayer; that stretch reads VWLWITFLGDPKILFLFYFPA. The Cytoplasmic portion of the chain corresponds to 46 to 54; it reads AYYASRRVG. The chain crosses the membrane as a helical span at residues 55-75; it reads IAVLWISLITEWLNLIFKWFL. The Lumenal portion of the chain corresponds to 76 to 114; that stretch reads FGDRPFWWVHESGYYSQAPAQVHQFPSSCETGPGSPSGH. Arginine 79 provides a ligand contact to substrate. The Proton donor role is filled by histidine 114. The chain crosses the membrane as a helical span at residues 115–135; that stretch reads CMITGAALWPIMTALSSQVAT. Residues 136 to 146 lie on the Cytoplasmic side of the membrane; that stretch reads RARSRWVRVMP. A helical membrane pass occupies residues 147–164; that stretch reads SLAYCTFLLAVGLSRIFI. Arginine 161 provides a ligand contact to substrate. Topologically, residues 165 to 169 are lumenal; sequence LAHFP. Histidine 167 acts as the Nucleophile in catalysis. Residues 170–186 traverse the membrane as a helical segment; it reads HQVLAGLITGAVLGWLM. The Cytoplasmic portion of the chain corresponds to 187 to 197; the sequence is TPRVPMERELS. The helical transmembrane segment at 198-218 threads the bilayer; sequence FYGLTALALMLGTSLIYWTLF. Residues 219 to 254 are Lumenal-facing; it reads TLGLDLSWSISLAFKWCERPEWIHVDSRPFASLSRD. Residues 255-273 traverse the membrane as a helical segment; the sequence is SGAALGLGIALHSPCYAQV. Over 274-283 the chain is Cytoplasmic; it reads RRAQLGNGQK. A helical transmembrane segment spans residues 284–304; the sequence is IACLVLAMGLLGPLDWLGHPP. At 305-307 the chain is on the lumenal side; the sequence is QIS. Residues 308–328 traverse the membrane as a helical segment; sequence LFYIFNFLKYTLWPCLVLALV. Over 329–346 the chain is Cytoplasmic; sequence PWAVHMFSAQEAPPIHSS.

It belongs to the glucose-6-phosphatase family. As to expression, ubiquitously expressed. Highly expressed in skeletal muscle, at intermediate levels in heart, brain, placenta, kidney, colon, thymus, spleen and pancreas. Also detected in testis, prostate, ovary, liver, lung, small intestine and peripheral blood lymphocytes.

It localises to the endoplasmic reticulum membrane. The catalysed reaction is D-glucose 6-phosphate + H2O = D-glucose + phosphate. The protein operates within carbohydrate biosynthesis; gluconeogenesis. Its activity is regulated as follows. Inhibited by vanadate. Hydrolyzes glucose-6-phosphate to glucose in the endoplasmic reticulum. May form with the glucose-6-phosphate transporter (SLC37A4/G6PT) a ubiquitously expressed complex responsible for glucose production through glycogenolysis and gluconeogenesis. Probably required for normal neutrophil function. The polypeptide is Glucose-6-phosphatase 3 (G6PC3) (Homo sapiens (Human)).